We begin with the raw amino-acid sequence, 707 residues long: MDLEAGSIRPRSDGEGGGPAAGRETDDSNVWKDLFLAYKTLGVVFGGLVTSPLYVYPSMNLSSPTEADYLGIYSIMFWTLTLIGVVKYVCIALNADDHGEGGTFAMYSLLCRHADIGILPSKRVYAEEDPLLHSQSAIARRPSRLGKFFEQSITARRVLLFVAVLGMCMLIGDGILTPAISVLSAIDGIRGPFPTVSKPVVEALSAAILIGLFLLQKYGTSKVSFLFSPIMAAWTFTTPIIGLYSIVHYYPGIFKAISPYYIVHFFLRNKRQGWQLLGGTVLCITGAEAMFADLGHFSKKAIQIAFLSSIYPSLVLTYAGQTAYLINNVNDFGDGFYKFVPRPVYWPMFVVATLAAIVASQSLISATFSVIKQSVVLDYFPRVKVVHTSQHKEGEVYSPEINYILMVLCVGVILGFGGGKAIGNAFGVVVIMVMLITTVLLTLVMIIIWRTPLVLAGLYFVPFFIMEGAYVSAVFTKIPEGGWLPFAVSITLAMIMFGWYYGRQRKFEYEMTNKVSLEHLGELLARPEVQRVPGLCFFYSNIQDGLTPILSHYIKNMSSLHTVTIFVTLRSLLVAKVDQSKRILINRLGPNGVYGCTVQYGYADNLSLEGGDDLAAQVTSCLQWHIQMDTDGRRSPEEEMAQLEAARLAGVVHVRGKMRFYVGEDAGWFDKIMLGFYEFLHGICRSALPVLGMPLQQRVEIGMLYKV.

The tract at residues 1 to 25 is disordered; the sequence is MDLEAGSIRPRSDGEGGGPAAGRET. The Cytoplasmic segment spans residues 1 to 34; the sequence is MDLEAGSIRPRSDGEGGGPAAGRETDDSNVWKDL. Residues 35–55 form a helical membrane-spanning segment; sequence FLAYKTLGVVFGGLVTSPLYV. Topologically, residues 56–71 are extracellular; sequence YPSMNLSSPTEADYLG. Asn60 is a glycosylation site (N-linked (GlcNAc...) asparagine). Residues 72-92 traverse the membrane as a helical segment; the sequence is IYSIMFWTLTLIGVVKYVCIA. Residues 93–157 lie on the Cytoplasmic side of the membrane; the sequence is LNADDHGEGG…FFEQSITARR (65 aa). The chain crosses the membrane as a helical span at residues 158–178; that stretch reads VLLFVAVLGMCMLIGDGILTP. Residues 179 to 194 are Extracellular-facing; that stretch reads AISVLSAIDGIRGPFP. A helical membrane pass occupies residues 195 to 215; that stretch reads TVSKPVVEALSAAILIGLFLL. At 216 to 222 the chain is on the cytoplasmic side; that stretch reads QKYGTSK. Residues 223-243 traverse the membrane as a helical segment; sequence VSFLFSPIMAAWTFTTPIIGL. Topologically, residues 244-276 are extracellular; sequence YSIVHYYPGIFKAISPYYIVHFFLRNKRQGWQL. Residues 277–297 form a helical membrane-spanning segment; it reads LGGTVLCITGAEAMFADLGHF. Over 298 to 305 the chain is Cytoplasmic; the sequence is SKKAIQIA. The helical transmembrane segment at 306–326 threads the bilayer; sequence FLSSIYPSLVLTYAGQTAYLI. The Extracellular portion of the chain corresponds to 327 to 343; it reads NNVNDFGDGFYKFVPRP. A helical transmembrane segment spans residues 344-364; it reads VYWPMFVVATLAAIVASQSLI. Residues 365–402 are Cytoplasmic-facing; the sequence is SATFSVIKQSVVLDYFPRVKVVHTSQHKEGEVYSPEIN. Residues 403–423 traverse the membrane as a helical segment; the sequence is YILMVLCVGVILGFGGGKAIG. Residues 424–427 lie on the Extracellular side of the membrane; that stretch reads NAFG. Residues 428 to 448 form a helical membrane-spanning segment; that stretch reads VVVIMVMLITTVLLTLVMIII. Residues 449–454 are Cytoplasmic-facing; sequence WRTPLV. Residues 455-475 traverse the membrane as a helical segment; that stretch reads LAGLYFVPFFIMEGAYVSAVF. The Extracellular segment spans residues 476–480; the sequence is TKIPE. The helical transmembrane segment at 481 to 501 threads the bilayer; the sequence is GGWLPFAVSITLAMIMFGWYY. Residues 502–707 are Cytoplasmic-facing; sequence GRQRKFEYEM…RVEIGMLYKV (206 aa).

The protein belongs to the HAK/KUP transporter (TC 2.A.72.3) family.

Its subcellular location is the membrane. Functionally, high-affinity potassium transporter. The sequence is that of Probable potassium transporter 17 (HAK17) from Oryza sativa subsp. japonica (Rice).